The chain runs to 473 residues: Glucose-1-phosphate adenylyltransferase small subunit, chloroplastic/amyloplastic (473 aa).

Residues 1–36 form a disordered region; it reads MDVPLASKTFPSPSPSKREQCNIDGHKSSSKHADLN. The segment covering 16-36 has biased composition (basic and acidic residues); the sequence is SKREQCNIDGHKSSSKHADLN.

It belongs to the bacterial/plant glucose-1-phosphate adenylyltransferase family. As to quaternary structure, heterotetramer. As to expression, abundantly expressed in the whole grains, a slightly less abundant expression is seen in leaves, while a low level expression is seen in the roots. A greater expression is seen in the endosperm than in the embryo and pericarp layers.

Its subcellular location is the plastid. The protein localises to the chloroplast. The protein resides in the amyloplast. It catalyses the reaction alpha-D-glucose 1-phosphate + ATP + H(+) = ADP-alpha-D-glucose + diphosphate. The protein operates within glycan biosynthesis; starch biosynthesis. Insensitive to 3'phosphoglycerate and orthophosphate. This protein plays a role in synthesis of starch. It catalyzes the synthesis of the activated glycosyl donor, ADP-glucose from Glc-1-P and ATP. The polypeptide is Glucose-1-phosphate adenylyltransferase small subunit, chloroplastic/amyloplastic (AGP-S) (Triticum aestivum (Wheat)).